Here is a 60-residue protein sequence, read N- to C-terminus: TIKVPEGFDYELYNRNDINRYVDAVLTIPKVICDHLGLGVKTGLPYIWHSKASNPFVNLK.

The protein belongs to the RGP family. As to quaternary structure, homopentamer or homohexamer. Mn(2+) is required as a cofactor. The cofactor is Mg(2+).

The protein resides in the secreted. It localises to the cell wall. Its subcellular location is the cell junction. The protein localises to the plasmodesma. It is found in the golgi apparatus. It carries out the reaction UDP-beta-L-arabinofuranose = UDP-beta-L-arabinopyranose. Probable UDP-L-arabinose mutase involved in the biosynthesis of cell wall non-cellulosic polysaccharides. The chain is Probable UDP-arabinopyranose mutase 1 from Phoenix dactylifera (Date palm).